Here is a 415-residue protein sequence, read N- to C-terminus: DNA polymerase IV (415 aa).

The 182-residue stretch at 15 to 196 (ILHVDMNCFF…LPVGAMHGIG (182 aa)) folds into the UmuC domain. 2 residues coordinate Mg(2+): Asp19 and Asp115. Residue Glu116 is part of the active site. The segment at 238 to 260 (KGMDDRQVDPSQMGQHKSVGNSM) is disordered. Polar residues predominate over residues 246–260 (DPSQMGQHKSVGNSM).

The protein belongs to the DNA polymerase type-Y family. In terms of assembly, monomer. The cofactor is Mg(2+).

It localises to the cytoplasm. It catalyses the reaction DNA(n) + a 2'-deoxyribonucleoside 5'-triphosphate = DNA(n+1) + diphosphate. Poorly processive, error-prone DNA polymerase involved in untargeted mutagenesis. Copies undamaged DNA at stalled replication forks, which arise in vivo from mismatched or misaligned primer ends. These misaligned primers can be extended by PolIV. Exhibits no 3'-5' exonuclease (proofreading) activity. May be involved in translesional synthesis, in conjunction with the beta clamp from PolIII. This chain is DNA polymerase IV, found in Bacillus cereus (strain ZK / E33L).